The following is a 249-amino-acid chain: tRNA uridine(34) hydroxylase (249 aa).

The Rhodanese domain occupies Thr124 to Asn218. Cys178 (cysteine persulfide intermediate) is an active-site residue.

The protein belongs to the TrhO family.

The enzyme catalyses uridine(34) in tRNA + AH2 + O2 = 5-hydroxyuridine(34) in tRNA + A + H2O. In terms of biological role, catalyzes oxygen-dependent 5-hydroxyuridine (ho5U) modification at position 34 in tRNAs. The protein is tRNA uridine(34) hydroxylase of Rickettsia canadensis (strain McKiel).